Reading from the N-terminus, the 412-residue chain is MSAQDDIDTGASNQPRSVVETDQQRAAVVGPRPPRHGEAECTDAIPARDSYQRYDTEVVDVPSMRPPVLPPSRANTLSKQQPRGDLSQSSASSHLPGLRQFTRLAPANMQGKDRSGLLSDRPSGLLLSDHTPNSQHAHRSAPQRDDNGRQSAASNRLSDTNSSAPSPGSTENERVRMHDQRTAPSAPPPLLSDLPRHSTDNKTYRLIIRQQPKQGRLCGLGSKDKRPLDPLPILQLRIIRPDGTEDEDAENSSNLVLQVSLCKEDPITGGYTDAVLVETNDPSYPWTRMLEGRIVASANLARDLDGSRACFFVFTDLSIRQEGQFRLAFKLLALSPPGQVPASAGGHVLTEALTEPFTIYSPRRFPGMTESTDLAKCLARQGIQVPVRNDIRKKQEHLDSLTASTDDMNGLE.

The segment at 1–197 (MSAQDDIDTG…PPLLSDLPRH (197 aa)) is disordered. Composition is skewed to polar residues over residues 73–93 (RANTLSKQQPRGDLSQSSASS) and 149–170 (RQSAASNRLSDTNSSAPSPGST). Residues 171–181 (ENERVRMHDQR) are compositionally biased toward basic and acidic residues. The region spanning 195 to 388 (PRHSTDNKTY…ARQGIQVPVR (194 aa)) is the Velvet domain.

Belongs to the velvet family. VelC subfamily.

It is found in the nucleus. In terms of biological role, velvet-domain-containing protein not required for disease or sexual development on seedlings. In Mycosarcoma maydis (Corn smut fungus), this protein is Sexual development regulator umv3.